A 299-amino-acid chain; its full sequence is uncharacterized protein (299 aa).

A disordered region spans residues 1-38; it reads MSLDSNSDTEFELVPKFQTQPTRGDAPKSPELEEVSTV.

This sequence belongs to the calycin superfamily. Fatty-acid binding protein (FABP) family.

This is an uncharacterized protein from Caenorhabditis elegans.